The chain runs to 880 residues: DNA-directed RNA polymerase subunit Rpo1N (880 aa).

Positions 58, 61, 68, and 71 each coordinate Zn(2+). DsDNA is bound by residues Lys88 and 92–95 (EFLK). Zn(2+)-binding residues include Cys98 and Cys101. Residue Lys138 participates in dsDNA binding. Positions 146 and 149 each coordinate Zn(2+). Residues Lys303, 305–310 (KEGRFR), Arg323, and Gln422 contribute to the dsDNA site. Mg(2+)-binding residues include Asp456, Asp458, and Asp460. Zn(2+) is bound by residues Arg573, Cys575, Cys580, and His582. DsDNA is bound by residues 812-822 (RTSQSGYMQRR) and Gln815.

It belongs to the RNA polymerase beta' chain family. Part of the 13-subunit RNA polymerase complex. Rpo1N and Rpo5 form a cleft which docks Rpo13. Interacts with Rpo8 on the periphery of the clamp head. It depends on Mg(2+) as a cofactor. Zn(2+) is required as a cofactor.

It localises to the cytoplasm. The catalysed reaction is RNA(n) + a ribonucleoside 5'-triphosphate = RNA(n+1) + diphosphate. Its function is as follows. DNA-dependent RNA polymerase (RNAP) catalyzes the transcription of DNA into RNA using the four ribonucleoside triphosphates as substrates. Forms the clamp head domain. The polypeptide is DNA-directed RNA polymerase subunit Rpo1N (Saccharolobus shibatae (strain ATCC 51178 / DSM 5389 / JCM 8931 / NBRC 15437 / B12) (Sulfolobus shibatae)).